The following is a 686-amino-acid chain: Amphiphysin (686 aa).

2 coiled-coil regions span residues 10–83 (AKNV…SLHE) and 144–191 (DYDS…QEEL). One can recognise a BAR domain in the interval 24–240 (VLQKLGKADE…MTKLGDQHAD (217 aa)). Disordered regions lie at residues 244-314 (SIQG…PTKE), 421-441 (AETEQALPTEPQAEEPPATAA), and 483-597 (VEEA…AGAV). The residue at position 252 (serine 252) is a Phosphoserine. Residue threonine 260 is modified to Phosphothreonine. Positions 261 to 274 (PSPPEEPSPLPSPT) are enriched in pro residues. Residues serine 262, serine 268, serine 272, and serine 276 each carry the phosphoserine modification. The residue at position 280 (threonine 280) is a Phosphothreonine. A compositionally biased stretch (low complexity) spans 424-441 (EQALPTEPQAEEPPATAA). A Phosphoserine modification is found at serine 500. The span at 541–562 (SNHEGEGEHQETATGTEPREAA) shows a compositional bias: basic and acidic residues. Positions 613-686 (GFLYKVETLH…FPENFTRRLE (74 aa)) constitute an SH3 domain. Residue serine 629 is modified to Phosphoserine.

In terms of assembly, heterodimer with BIN1. Binds SH3GLB1. Interacts with REPS1 and SGIP1. Binds AP2A2. Interacts with AP2B1. Interacts with DNM1 and SYNJ1.

It is found in the cytoplasmic vesicle. It localises to the secretory vesicle. The protein localises to the synaptic vesicle membrane. The protein resides in the cytoplasm. Its subcellular location is the cytoskeleton. Functionally, may participate in mechanisms of regulated exocytosis in synapses and certain endocrine cell types. May control the properties of the membrane associated cytoskeleton. The sequence is that of Amphiphysin (Amph) from Mus musculus (Mouse).